A 1237-amino-acid chain; its full sequence is Anion exchange protein 2 (1237 aa).

Positions 1–238 (MSSAPRRPAS…YNLQERRRIG (238 aa)) are disordered. The Cytoplasmic portion of the chain corresponds to 1–703 (MSSAPRRPAS…SDFRDALDPQ (703 aa)). Basic and acidic residues-rich tracts occupy residues 38–48 (LRTLGVERFEE) and 57–74 (GGEE…EYHR). Composition is skewed to basic residues over residues 75–84 (QSSHHIHHPL) and 93–109 (RRRK…RRRP). Phosphoserine occurs at positions 112, 131, 144, 170, 172, and 239. The span at 119–132 (TIEEGEEDEEEASE) shows a compositional bias: acidic residues. T253 carries the post-translational modification Phosphothreonine. K270 is modified (N6-methyllysine). Positions 285–316 (VRKNAKGSTQAAREGREPGPTPRARPRAPHKP) are disordered. S439 is subject to Phosphoserine. The disordered stretch occupies residues 445 to 466 (SLLGHHHAQGTESDPHVTEPLI). Transmembrane regions (helical) follow at residues 704–727 (CLAA…GLLG), 733–770 (LIGV…LLVF), 790–812 (VWIG…SFLV), and 822–843 (IFAF…IKIF). The segment at 704–1237 (CLAAVIFIYF…DEYNEMPMPV (534 aa)) is membrane (anion exchange). Residues 844-896 (QEHPLHGCSGSNDSEAGSSSSSNMTWATTILVPDNSSASGQSGQEKPRGQPNT) lie on the Extracellular side of the membrane. Residues N855, N866, and N878 are each glycosylated (N-linked (GlcNAc...) asparagine). The helical transmembrane segment at 897–914 (ALLSLVLMAGTFFIAFFL) threads the bilayer. The Cytoplasmic portion of the chain corresponds to 915-929 (RKFKNSRFFPGRIRR). The next 5 helical transmembrane spans lie at 930–950 (VIGD…DYSI), 984–1006 (PFPV…LIFM), 1032–1053 (LLLI…LAAA), 1087–1132 (VTGL…IQFY), and 1159–1195 (MHLF…TVPL). A lipid anchor (S-palmitoyl cysteine) is attached at C1169.

It belongs to the anion exchanger (TC 2.A.31) family. Expressed in the choroid plexus epithelium (at protein level). Expressed in the parotid gland and sublingual salivary gland acinar cells (at protein level). As to expression, widely expressed at similar levels in all tissues examined. Expressed in the testis. In terms of tissue distribution, predominantly expressed in stomach although they are also detected at lower levels in other tissues. Expressed in the testis. Stomach-specific. As to expression, expressed at slightly higher levels in lung and stomach than in other tissues.

The protein resides in the apical cell membrane. It localises to the basolateral cell membrane. It carries out the reaction hydrogencarbonate(in) + chloride(out) = hydrogencarbonate(out) + chloride(in). With respect to regulation, inhibited by 4,4'-diisothiocyanatostilbene-2,2'-disulfonic acid (DIDS) and acetazolamide. Muscarinic receptor stimulation enhances activity through a Ca(2+)-dependent mechanism. Functionally, sodium-independent anion exchanger which mediates the electroneutral exchange of chloride for bicarbonate ions across the cell membrane. Plays an important role in osteoclast differentiation and function. Regulates bone resorption and calpain-dependent actin cytoskeleton organization in osteoclasts via anion exchange-dependent control of pH. Essential for intracellular pH regulation in CD8(+) T-cells upon CD3 stimulation, modulating CD8(+) T-cell responses. In terms of biological role, plays a critical role in male fertility and spermiogenesis. This chain is Anion exchange protein 2 (Slc4a2), found in Mus musculus (Mouse).